We begin with the raw amino-acid sequence, 82 residues long: Cytochrome c-551 (82 aa).

Residues cysteine 12, cysteine 15, histidine 16, and methionine 61 each contribute to the heme c site.

In terms of processing, binds 1 heme c group covalently per subunit.

Its function is as follows. This is a prokaryotic monoheme cytochrome, unreactive with mitochondrial cytochrome C oxidase or reductase. It functions in nitrite and nitrate respiration in Pseudomonas, but it is also found in other bacteria. In Ectopseudomonas mendocina (Pseudomonas mendocina), this protein is Cytochrome c-551.